The chain runs to 827 residues: Periplasmic nitrate reductase (827 aa).

The segment at residues 1-33 is a signal peptide (tat-type signal); it reads MNLSRRDFMKANAAMAAATAAGLTIPVKNVVAA. Residues 37–93 form the 4Fe-4S Mo/W bis-MGD-type domain; the sequence is IKWDKGVCRFCGTGCAVLVGTKDGRVVASQGDPDAEVNRGLNCIKGYFLPKIMYGKD. Residues Cys-44, Cys-47, Cys-51, and Cys-79 each coordinate [4Fe-4S] cluster. Mo-bis(molybdopterin guanine dinucleotide)-binding positions include Lys-81, Gln-148, Asn-173, Cys-177, 210-217, 241-245, 260-262, Met-370, Gln-374, Asn-480, 506-507, Lys-529, Asp-556, and 716-725; these read WGSNMAEM, STYEH, QTD, SD, and TGRVLEHWHT. Phe-792 lines the substrate pocket. Mo-bis(molybdopterin guanine dinucleotide) is bound by residues Asn-800 and Lys-817.

The protein belongs to the prokaryotic molybdopterin-containing oxidoreductase family. NasA/NapA/NarB subfamily. As to quaternary structure, component of the periplasmic nitrate reductase NapAB complex composed of NapA and NapB. The cofactor is [4Fe-4S] cluster. Mo-bis(molybdopterin guanine dinucleotide) is required as a cofactor. Predicted to be exported by the Tat system. The position of the signal peptide cleavage has not been experimentally proven.

Its subcellular location is the periplasm. The enzyme catalyses 2 Fe(II)-[cytochrome] + nitrate + 2 H(+) = 2 Fe(III)-[cytochrome] + nitrite + H2O. Its function is as follows. Catalytic subunit of the periplasmic nitrate reductase complex NapAB. Receives electrons from NapB and catalyzes the reduction of nitrate to nitrite. This chain is Periplasmic nitrate reductase, found in Haemophilus influenzae (strain PittEE).